The primary structure comprises 278 residues: Sulfur carrier protein FdhD (278 aa).

C121 acts as the Cysteine persulfide intermediate in catalysis. 260-265 (FCKPGR) is a binding site for Mo-bis(molybdopterin guanine dinucleotide).

The protein belongs to the FdhD family.

The protein resides in the cytoplasm. In terms of biological role, required for formate dehydrogenase (FDH) activity. Acts as a sulfur carrier protein that transfers sulfur from IscS to the molybdenum cofactor prior to its insertion into FDH. The polypeptide is Sulfur carrier protein FdhD (Salmonella choleraesuis (strain SC-B67)).